Reading from the N-terminus, the 309-residue chain is Homoserine kinase (309 aa).

95 to 105 (PHGRGLGSSSA) provides a ligand contact to ATP.

The protein belongs to the GHMP kinase family. Homoserine kinase subfamily.

The protein resides in the cytoplasm. It catalyses the reaction L-homoserine + ATP = O-phospho-L-homoserine + ADP + H(+). The protein operates within amino-acid biosynthesis; L-threonine biosynthesis; L-threonine from L-aspartate: step 4/5. Its function is as follows. Catalyzes the ATP-dependent phosphorylation of L-homoserine to L-homoserine phosphate. The polypeptide is Homoserine kinase (Streptomyces coelicolor (strain ATCC BAA-471 / A3(2) / M145)).